Here is a 530-residue protein sequence, read N- to C-terminus: MATPDVSVHMEEVVVVTTPDTAVDGSGVEEVKTVLVTTNLAPHGGDLTEDNMETENAAAAAAAAFTASSQLKEAVLVKMAEEGENLEAEIVYPITCGDSRANLIWRKFVCPGINVKCVQYDEHVISPKEFVHLAGKSTLKDWKRAIRMNGIMLRKIMDSGELDFYQHDKVCSNTCRSTKIDLSGARVSLSSPTSTEYIPLTPAAADVNGSPATITIETCEDPGDWTTTIGDDTFAFWRGLKDAGLLDEVIQEFQQELEETMKGLQQRVQDPPLQLRDAVLLNNIVQNFGMLDLVKKVLASHKCQMDRSREQYARDLAALEQQCDEHRRRAKELKHKSQHLSNVLMTLTPVPLPSPMKRPRLARATSGPAAMASQVLTQSAQIALSPGMPVSQLTSVPLGKVVSTLPSTVLGKGSPQAAPASSPASPLLGGYTVLASSGSTFPNAVEIHPDTSSLTVLSTAAMQDGSTVLKVVSPLQLLTLPGLGPTLQNVAQASPAGSTIVTMPTATATGPEEHTATIEVAAVAEDHEQK.

Positions 81-163 (EEGENLEAEI…RKIMDSGELD (83 aa)) constitute an SAND domain. C110 contributes to the Zn(2+) binding site. The DNA site is built by K136, K140, K143, and R154. Residue K155 forms a Glycyl lysine isopeptide (Lys-Gly) (interchain with G-Cter in SUMO1); alternate linkage. Residue K155 forms a Glycyl lysine isopeptide (Lys-Gly) (interchain with G-Cter in SUMO2); alternate linkage. H167, C171, and C175 together coordinate Zn(2+). 2 coiled-coil regions span residues 245 to 270 (LLDE…RVQD) and 304 to 344 (QMDR…SNVL). Position 373 is a phosphoserine (S373).

In terms of assembly, homodimer, and heterodimer of GMEB1 and GMEB2. Interacts with the glucocorticoid receptor (NR3C1). May interact with CREB-binding protein (CBP).

Its subcellular location is the nucleus. It is found in the cytoplasm. Its function is as follows. Trans-acting factor that binds to glucocorticoid modulatory elements (GME) present in the TAT (tyrosine aminotransferase) promoter and increases sensitivity to low concentrations of glucocorticoids. Also binds to the transferrin receptor promoter. The polypeptide is Glucocorticoid modulatory element-binding protein 2 (Gmeb2) (Mus musculus (Mouse)).